The sequence spans 409 residues: Putative lipoate-protein ligase A (409 aa).

Positions 146–330 constitute a BPL/LPL catalytic domain; sequence GPDNCRLVFY…RFQKTFKVDG (185 aa). ATP is bound by residues Arg188, 193-196, and Lys249; that span reads GTVL. A (R)-lipoate-binding site is contributed by Lys249.

This sequence belongs to the LplA family. As to quaternary structure, monomer.

The enzyme catalyses L-lysyl-[lipoyl-carrier protein] + (R)-lipoate + ATP = N(6)-[(R)-lipoyl]-L-lysyl-[lipoyl-carrier protein] + AMP + diphosphate + H(+). Its pathway is protein modification; protein lipoylation via exogenous pathway; protein N(6)-(lipoyl)lysine from lipoate: step 1/2. The protein operates within protein modification; protein lipoylation via exogenous pathway; protein N(6)-(lipoyl)lysine from lipoate: step 2/2. Functionally, catalyzes both the ATP-dependent activation of exogenously supplied lipoate to lipoyl-AMP and the transfer of the activated lipoyl onto the lipoyl domains of lipoate-dependent enzymes. This chain is Putative lipoate-protein ligase A (AIM22), found in Saccharomyces cerevisiae (strain YJM789) (Baker's yeast).